Consider the following 421-residue polypeptide: Medium-chain specific acyl-CoA dehydrogenase, mitochondrial (421 aa).

The transit peptide at 1–25 directs the protein to the mitochondrion; that stretch reads MAAGFGRCCRVLRSISRFQWRSQHT. N6-acetyllysine; alternate is present on K69. K69 is modified (N6-succinyllysine; alternate). FAD is bound at residue 158–167; that stretch reads YCVTEPGAGS. S167 contacts octanoyl-CoA. K179 carries the N6-succinyllysine modification. 191 to 193 is a binding site for FAD; it reads WIT. Residues K212, K217, and K271 each carry the N6-acetyllysine; alternate modification. 3 positions are modified to N6-succinyllysine; alternate: K212, K217, and K271. D278 contributes to the octanoyl-CoA binding site. At K279 the chain carries N6-acetyllysine. Residue R281 coordinates octanoyl-CoA. K301 carries the N6-acetyllysine modification. FAD is bound by residues 306 to 308 and 316 to 317; these read RKT and HQ. R349 and T351 together coordinate octanoyl-CoA. Residue T351 is modified to Phosphothreonine. 374-378 is an FAD binding site; sequence QILGG. An octanoyl-CoA-binding site is contributed by E401. Catalysis depends on E401, which acts as the Proton acceptor. Position 402–405 (402–405) interacts with FAD; that stretch reads GTSQ.

The protein belongs to the acyl-CoA dehydrogenase family. As to quaternary structure, homotetramer. Interacts with the heterodimeric electron transfer flavoprotein ETF. FAD serves as cofactor. In terms of processing, acetylated. Could occur at proximity of the cofactor-binding sites and reduce the catalytic activity. Could be deacetylated by SIRT3.

It is found in the mitochondrion matrix. The enzyme catalyses a medium-chain 2,3-saturated fatty acyl-CoA + oxidized [electron-transfer flavoprotein] + H(+) = a medium-chain (2E)-enoyl-CoA + reduced [electron-transfer flavoprotein]. It catalyses the reaction pentanoyl-CoA + oxidized [electron-transfer flavoprotein] + H(+) = (2E)-pentenoyl-CoA + reduced [electron-transfer flavoprotein]. The catalysed reaction is hexanoyl-CoA + oxidized [electron-transfer flavoprotein] + H(+) = (2E)-hexenoyl-CoA + reduced [electron-transfer flavoprotein]. It carries out the reaction octanoyl-CoA + oxidized [electron-transfer flavoprotein] + H(+) = (2E)-octenoyl-CoA + reduced [electron-transfer flavoprotein]. The enzyme catalyses decanoyl-CoA + oxidized [electron-transfer flavoprotein] + H(+) = (2E)-decenoyl-CoA + reduced [electron-transfer flavoprotein]. It catalyses the reaction dodecanoyl-CoA + oxidized [electron-transfer flavoprotein] + H(+) = (2E)-dodecenoyl-CoA + reduced [electron-transfer flavoprotein]. The catalysed reaction is tetradecanoyl-CoA + oxidized [electron-transfer flavoprotein] + H(+) = (2E)-tetradecenoyl-CoA + reduced [electron-transfer flavoprotein]. It carries out the reaction oxidized [electron-transfer flavoprotein] + hexadecanoyl-CoA + H(+) = (2E)-hexadecenoyl-CoA + reduced [electron-transfer flavoprotein]. It functions in the pathway lipid metabolism; mitochondrial fatty acid beta-oxidation. Medium-chain specific acyl-CoA dehydrogenase is one of the acyl-CoA dehydrogenases that catalyze the first step of mitochondrial fatty acid beta-oxidation, an aerobic process breaking down fatty acids into acetyl-CoA and allowing the production of energy from fats. The first step of fatty acid beta-oxidation consists in the removal of one hydrogen from C-2 and C-3 of the straight-chain fatty acyl-CoA thioester, resulting in the formation of trans-2-enoyl-CoA. Electron transfer flavoprotein (ETF) is the electron acceptor that transfers electrons to the main mitochondrial respiratory chain via ETF-ubiquinone oxidoreductase (ETF dehydrogenase). Among the different mitochondrial acyl-CoA dehydrogenases, medium-chain specific acyl-CoA dehydrogenase acts specifically on acyl-CoAs with saturated 6 to 12 carbons long primary chains. The polypeptide is Medium-chain specific acyl-CoA dehydrogenase, mitochondrial (Pan troglodytes (Chimpanzee)).